We begin with the raw amino-acid sequence, 190 residues long: Imidazoleglycerol-phosphate dehydratase (190 aa).

The protein belongs to the imidazoleglycerol-phosphate dehydratase family.

It localises to the cytoplasm. It carries out the reaction D-erythro-1-(imidazol-4-yl)glycerol 3-phosphate = 3-(imidazol-4-yl)-2-oxopropyl phosphate + H2O. It functions in the pathway amino-acid biosynthesis; L-histidine biosynthesis; L-histidine from 5-phospho-alpha-D-ribose 1-diphosphate: step 6/9. The polypeptide is Imidazoleglycerol-phosphate dehydratase (Campylobacter hominis (strain ATCC BAA-381 / DSM 21671 / CCUG 45161 / LMG 19568 / NCTC 13146 / CH001A)).